A 164-amino-acid chain; its full sequence is MTEFTHINQQGHAKMVDVSDKQITKRTAVAHSSITVNETIFKQISNNTNTKGNVLNTAQIAGIMAAKNTSTIIPMCHPLPLTGIDVHFSWDETNAPLYTLNIQTTVSTTGKTGVEMEALTAASATALTIYDMTKAVDKGMIIGETYLESKSGGKSGDFQRQSGQ.

Substrate contacts are provided by residues 75 to 77 (MCH) and 116 to 117 (ME). D131 is a catalytic residue.

This sequence belongs to the MoaC family. In terms of assembly, homohexamer; trimer of dimers.

It carries out the reaction (8S)-3',8-cyclo-7,8-dihydroguanosine 5'-triphosphate = cyclic pyranopterin phosphate + diphosphate. The protein operates within cofactor biosynthesis; molybdopterin biosynthesis. Catalyzes the conversion of (8S)-3',8-cyclo-7,8-dihydroguanosine 5'-triphosphate to cyclic pyranopterin monophosphate (cPMP). This Staphylococcus aureus (strain Mu3 / ATCC 700698) protein is Cyclic pyranopterin monophosphate synthase.